A 49-amino-acid polypeptide reads, in one-letter code: Large ribosomal subunit protein bL33 (49 aa).

Belongs to the bacterial ribosomal protein bL33 family.

In Desulforudis audaxviator (strain MP104C), this protein is Large ribosomal subunit protein bL33.